The chain runs to 229 residues: 2-C-methyl-D-erythritol 4-phosphate cytidylyltransferase (229 aa).

The protein belongs to the IspD/TarI cytidylyltransferase family. IspD subfamily.

The enzyme catalyses 2-C-methyl-D-erythritol 4-phosphate + CTP + H(+) = 4-CDP-2-C-methyl-D-erythritol + diphosphate. It functions in the pathway isoprenoid biosynthesis; isopentenyl diphosphate biosynthesis via DXP pathway; isopentenyl diphosphate from 1-deoxy-D-xylulose 5-phosphate: step 2/6. Its function is as follows. Catalyzes the formation of 4-diphosphocytidyl-2-C-methyl-D-erythritol from CTP and 2-C-methyl-D-erythritol 4-phosphate (MEP). The chain is 2-C-methyl-D-erythritol 4-phosphate cytidylyltransferase from Clostridium acetobutylicum (strain ATCC 824 / DSM 792 / JCM 1419 / IAM 19013 / LMG 5710 / NBRC 13948 / NRRL B-527 / VKM B-1787 / 2291 / W).